The chain runs to 403 residues: Basic leucine zipper 25 (403 aa).

2 disordered regions span residues 13 to 128 (SFWP…APVV) and 156 to 259 (VKPE…EFDT). The span at 24–33 (PGSSSTPSPT) shows a compositional bias: low complexity. The span at 56–69 (LSGSDSSPTTNTIE) shows a compositional bias: polar residues. 2 stretches are compositionally biased toward low complexity: residues 115-128 (APSSDPVDSSAPVV) and 161-174 (SSASASNQKQAQGS). Residues 175-195 (IVAQTSPGASSVRFSPTTSTQ) show a composition bias toward polar residues. A compositionally biased stretch (acidic residues) spans 212 to 226 (DSDDDDLDGDADNGD). Serine 213 carries the phosphoserine modification. Residues 229 to 292 (DVKRARRMLS…DAAAVDNRIL (64 aa)) enclose the bZIP domain. The basic motif stretch occupies residues 231 to 250 (KRARRMLSNRESARRSRRRK). The short motif at 233-240 (ARRMLSNR) is the Nuclear localization signal element. A leucine-zipper region spans residues 264-271 (LRAEHSTL). The span at 332-345 (NTPSASSSIPPNSN) shows a compositional bias: low complexity. Disordered regions lie at residues 332-361 (NTPSASSSIPPNSNHILKPANSSTNTSAGL) and 380-403 (EGMQNPFAPDSNLYETLPHWNHKH). Residues 351-361 (ANSSTNTSAGL) show a composition bias toward polar residues.

It belongs to the bZIP family. Homodimer. Forms a heterodimer with BZIP1, BZIP1, BZIP2, BZIP9, BZIP11, BZIP44, BZIP53 and BZIP63. Interacts with ABI3 and forms a complex made of ABI3, BZIP53 and BZIP25. In terms of tissue distribution, expressed in roots, shoots, stems, leaves, stipulae, siliques, seeds, pollen, and flowers.

The protein resides in the nucleus. Functionally, transcription factor that binds to the 5'-ACGT-3' box, especially present in G-box-like motif (5'-CCACGTGGCC-3'), ABRE elements, of seed storage protein (SSP) encoding gene promoters (e.g. At2S and CRU3) and promotes their expression in seeds when in complex with ABI3 and BZIP53. The sequence is that of Basic leucine zipper 25 (BZIP25) from Arabidopsis thaliana (Mouse-ear cress).